The sequence spans 413 residues: Putative competence-damage inducible protein (413 aa).

This sequence belongs to the CinA family.

The sequence is that of Putative competence-damage inducible protein from Alkaliphilus oremlandii (strain OhILAs) (Clostridium oremlandii (strain OhILAs)).